We begin with the raw amino-acid sequence, 434 residues long: Ribosomal protein uS12 methylthiotransferase RimO (434 aa).

The 111-residue stretch at 2 to 112 (AKIGFVSLGC…VLEAVQVVLP (111 aa)) folds into the MTTase N-terminal domain. 6 residues coordinate [4Fe-4S] cluster: cysteine 11, cysteine 47, cysteine 76, cysteine 142, cysteine 146, and cysteine 149. Residues 128–365 (LTPRHYAYVK…LELQARVSLR (238 aa)) enclose the Radical SAM core domain. Residues 368 to 434 (QRFVGKTLEV…DTYDLHGVQA (67 aa)) enclose the TRAM domain.

Belongs to the methylthiotransferase family. RimO subfamily. Requires [4Fe-4S] cluster as cofactor.

The protein resides in the cytoplasm. The catalysed reaction is L-aspartate(89)-[ribosomal protein uS12]-hydrogen + (sulfur carrier)-SH + AH2 + 2 S-adenosyl-L-methionine = 3-methylsulfanyl-L-aspartate(89)-[ribosomal protein uS12]-hydrogen + (sulfur carrier)-H + 5'-deoxyadenosine + L-methionine + A + S-adenosyl-L-homocysteine + 2 H(+). Functionally, catalyzes the methylthiolation of an aspartic acid residue of ribosomal protein uS12. This Thermus thermophilus (strain ATCC 27634 / DSM 579 / HB8) protein is Ribosomal protein uS12 methylthiotransferase RimO.